We begin with the raw amino-acid sequence, 218 residues long: MQNQLVVKRLGRRDYLPVWQAMHEFTDTRNEETPDEVWLVEHNPVFTQGQAGKAEHLLNTGDIPVVQSDRGGQVTYHGPGQLVAYFLINLRRKKLGVRDLVTTIENLVINTLKAYNIDSAARPDAPGVYVEGRKICSLGLRIRKGCSFHGLALNVNMDLSPFLRINPCGYQGMEMVQVSELGGPKDIALVEQQLVKELVNLLGYEQVEFSTEAEVREA.

The 176-residue stretch at 31–206 (EETPDEVWLV…ELVNLLGYEQ (176 aa)) folds into the BPL/LPL catalytic domain. Substrate-binding positions include 70 to 77 (RGGQVTYH), 137 to 139 (SLG), and 150 to 152 (GLA). Catalysis depends on Cys-168, which acts as the Acyl-thioester intermediate.

The protein belongs to the LipB family.

It localises to the cytoplasm. It catalyses the reaction octanoyl-[ACP] + L-lysyl-[protein] = N(6)-octanoyl-L-lysyl-[protein] + holo-[ACP] + H(+). Its pathway is protein modification; protein lipoylation via endogenous pathway; protein N(6)-(lipoyl)lysine from octanoyl-[acyl-carrier-protein]: step 1/2. Catalyzes the transfer of endogenously produced octanoic acid from octanoyl-acyl-carrier-protein onto the lipoyl domains of lipoate-dependent enzymes. Lipoyl-ACP can also act as a substrate although octanoyl-ACP is likely to be the physiological substrate. This is Octanoyltransferase from Vibrio vulnificus (strain CMCP6).